A 248-amino-acid chain; its full sequence is Transmembrane protein 182 (248 aa).

The N-terminal stretch at 1-26 (MKIHVAGFFAGLFGALATLFILLSFG) is a signal peptide. Over 27-136 (TDYWLLASET…IIYRGFWSVS (110 aa)) the chain is Extracellular. N-linked (GlcNAc...) asparagine glycans are attached at residues Asn-66 and Asn-119. A helical membrane pass occupies residues 137–157 (MLVGVAAVVAGGFIIICAAPF). Topologically, residues 158-167 (ASHRLYKAGG) are cytoplasmic. A helical transmembrane segment spans residues 168-188 (GLYLISGFFVLVVTAMYVIWI). The Extracellular portion of the chain corresponds to 189-218 (DVLDVISLYTEYQKLNKCADFELNKTYGLS). A glycan (N-linked (GlcNAc...) asparagine) is linked at Asn-212. A helical membrane pass occupies residues 219 to 239 (FMFAPVGVFFCFLSGLLFLVI). The Cytoplasmic portion of the chain corresponds to 240–248 (GRTVHHQYN).

It belongs to the TMEM182 family.

The protein localises to the cell membrane. May negatively regulate myogenesis and skeletal muscle regeneration. This chain is Transmembrane protein 182 (tmem182a), found in Danio rerio (Zebrafish).